The following is a 91-amino-acid chain: MAVSKTTMLIVLVAIILSCVSISNARQMQRPQNVECVGGECQPKHPQQYFGSCFRDSDCRNSCFPYCRYQKCHHHECICSLCSSEVAPSPK.

The N-terminal stretch at 1–25 (MAVSKTTMLIVLVAIILSCVSISNA) is a signal peptide. 4 disulfides stabilise this stretch: Cys41/Cys82, Cys53/Cys72, Cys59/Cys77, and Cys63/Cys79.

The protein belongs to the DEFL family.

The protein resides in the secreted. The polypeptide is Defensin-like protein 269 (Arabidopsis thaliana (Mouse-ear cress)).